Reading from the N-terminus, the 432-residue chain is D-amino acid dehydrogenase (432 aa).

3–17 (VVILGSGVVGVASAW) serves as a coordination point for FAD.

Belongs to the DadA oxidoreductase family. FAD serves as cofactor.

It catalyses the reaction a D-alpha-amino acid + A + H2O = a 2-oxocarboxylate + AH2 + NH4(+). Its pathway is amino-acid degradation; D-alanine degradation; NH(3) and pyruvate from D-alanine: step 1/1. Functionally, oxidative deamination of D-amino acids. The chain is D-amino acid dehydrogenase from Escherichia coli O127:H6 (strain E2348/69 / EPEC).